The sequence spans 188 residues: Elongation factor P (188 aa).

Belongs to the elongation factor P family.

It is found in the cytoplasm. The protein operates within protein biosynthesis; polypeptide chain elongation. Functionally, involved in peptide bond synthesis. Stimulates efficient translation and peptide-bond synthesis on native or reconstituted 70S ribosomes in vitro. Probably functions indirectly by altering the affinity of the ribosome for aminoacyl-tRNA, thus increasing their reactivity as acceptors for peptidyl transferase. This is Elongation factor P from Rickettsia canadensis (strain McKiel).